The following is a 110-amino-acid chain: MNLQEILKEIDFKKGEGLIPTIIQDFYSGEVLMLAYMNKESLEKTIETNTTWFWSRSREELWNKGATSGNLQYVKSIHIDCDGDTLLIKVEQVGPACHTGHRSCFYTTLI.

Aspartate 80 contributes to the Mg(2+) binding site. Residue cysteine 81 participates in Zn(2+) binding. Residues aspartate 82 and aspartate 84 each coordinate Mg(2+). Zn(2+) contacts are provided by cysteine 97 and cysteine 104.

It belongs to the PRA-CH family. Homodimer. Mg(2+) serves as cofactor. The cofactor is Zn(2+).

It is found in the cytoplasm. The enzyme catalyses 1-(5-phospho-beta-D-ribosyl)-5'-AMP + H2O = 1-(5-phospho-beta-D-ribosyl)-5-[(5-phospho-beta-D-ribosylamino)methylideneamino]imidazole-4-carboxamide. It participates in amino-acid biosynthesis; L-histidine biosynthesis; L-histidine from 5-phospho-alpha-D-ribose 1-diphosphate: step 3/9. Catalyzes the hydrolysis of the adenine ring of phosphoribosyl-AMP. This is Phosphoribosyl-AMP cyclohydrolase from Clostridium botulinum (strain 657 / Type Ba4).